Consider the following 646-residue polypeptide: Altered inheritance of mitochondria protein 9, mitochondrial (646 aa).

The N-terminal 34 residues, 1 to 34 (MLRIPSRIGSRQVLACAGRNLKCGSVMRHISRRN), are a transit peptide targeting the mitochondrion.

Belongs to the AIM9 family.

The protein localises to the mitochondrion. This chain is Altered inheritance of mitochondria protein 9, mitochondrial (AIM9), found in Candida glabrata (strain ATCC 2001 / BCRC 20586 / JCM 3761 / NBRC 0622 / NRRL Y-65 / CBS 138) (Yeast).